Reading from the N-terminus, the 686-residue chain is Pentatricopeptide repeat-containing protein At4g08210 (686 aa).

18 PPR repeats span residues 4 to 38, 39 to 69, 70 to 104, 106 to 140, 141 to 171, 172 to 206, 207 to 236, 237 to 271, 272 to 302, 306 to 340, 341 to 375, 376 to 406, 407 to 441, 442 to 476, 477 to 507, 508 to 542, 543 to 573, and 579 to 609; these read DLKLIAAGLRHCGKVQAFKRGESIQAHVIKQGISQ, NVFIANNVISMYVDFRLLSDAHKVFDEMSER, NIVTWTTMVSGYTSDGKPNKAIELYRRMLDSEEEA, NEFMYSAVLKACGLVGDIQLGILVYERIGKENLRG, DVVLMNSVVDMYVKNGRLIEANSSFKEILRP, SSTSWNTLISGYCKAGLMDEAVTLFHRMPQPNVVS, WNCLISGFVDKGSPRALEFLVRMQREGLVL, DGFALPCGLKACSFGGLLTMGKQLHCCVVKSGLES, SPFAISALIDMYSNCGSLIYAADVFHQEKLA, SVAVWNSMLSGFLINEENEAALWLLLQIYQSDLCF, DSYTLSGALKICINYVNLRLGLQVHSLVVVSGYEL, DYIVGSILVDLHANVGNIQDAHKLFHRLPNK, DIIAFSGLIRGCVKSGFNSLAFYLFRELIKLGLDA, DQFIVSNILKVCSSLASLGWGKQIHGLCIKKGYES, EPVTATALVDMYVKCGEIDNGVVLFDGMLER, DVVSWTGIIVGFGQNGRVEEAFRYFHKMINIGIEP, NKVTFLGLLSACRHSGLLEEARSTLETMKSE, and YLEHYYCVVDLLGQAGLFQEANELINKMPLE. Residues 614–686 form a type E motif; degenerate region; sequence IWTSLLTACG…AKESGMSWII (73 aa).

Belongs to the PPR family. PCMP-E subfamily.

This Arabidopsis thaliana (Mouse-ear cress) protein is Pentatricopeptide repeat-containing protein At4g08210 (PCMP-E100).